Consider the following 499-residue polypeptide: Probable cytosol aminopeptidase (499 aa).

Lysine 267 and aspartate 272 together coordinate Mn(2+). The active site involves lysine 279. The Mn(2+) site is built by aspartate 290, aspartate 349, and glutamate 351. Residue arginine 353 is part of the active site.

The protein belongs to the peptidase M17 family. The cofactor is Mn(2+).

Its subcellular location is the cytoplasm. It carries out the reaction Release of an N-terminal amino acid, Xaa-|-Yaa-, in which Xaa is preferably Leu, but may be other amino acids including Pro although not Arg or Lys, and Yaa may be Pro. Amino acid amides and methyl esters are also readily hydrolyzed, but rates on arylamides are exceedingly low.. It catalyses the reaction Release of an N-terminal amino acid, preferentially leucine, but not glutamic or aspartic acids.. Its function is as follows. Presumably involved in the processing and regular turnover of intracellular proteins. Catalyzes the removal of unsubstituted N-terminal amino acids from various peptides. The protein is Probable cytosol aminopeptidase of Alkaliphilus oremlandii (strain OhILAs) (Clostridium oremlandii (strain OhILAs)).